An 805-amino-acid polypeptide reads, in one-letter code: Na(+)/H(+) antiporter subunit A (805 aa).

The next 21 membrane-spanning stretches (helical) occupy residues 4-22, 29-51, 80-102, 109-128, 132-154, 167-189, 209-231, 244-266, 271-293, 300-322, 332-354, 375-397, 431-453, 474-496, 529-551, 597-614, 629-651, 656-674, 679-701, 714-736, and 778-795; these read LHWA…PFLY, HTGW…YLSI, SLLF…IFYL, LNNF…GVVL, LIVL…SYWF, MLIT…VMTG, FLPA…PFHI, SAYL…LTPV, AEWF…TSAV, GILA…LGSA, PAFY…TFKG, LGGL…ASMA, IIIV…IMFF, IGML…FPNI, GFNA…FLMM, YFAY…YTMF, IAPY…PFIN, AVVV…FVVF, LALT…FYHL, NVLN…LSSL, and MLEV…IALI.

Belongs to the CPA3 antiporters (TC 2.A.63) subunit A family. In terms of assembly, forms a heterooligomeric complex that consists of seven subunits: MrpA, MrpB, MrpC, MrpD, MrpE, MrpF and MrpG.

The protein localises to the cell membrane. In terms of biological role, mnh complex is a Na(+)Li(+)/H(+) antiporter involved in Na(+) and/or Li(+) excretion and Na(+) resistance. Na(+)/H(+) antiport consumes a transmembrane electrical potential, and is thus inferred to be electrogenic. Does not transport K(+), Ca(2+) or Mg(2+). This chain is Na(+)/H(+) antiporter subunit A (mrpA), found in Alkalihalophilus pseudofirmus (strain ATCC BAA-2126 / JCM 17055 / OF4) (Bacillus pseudofirmus).